A 427-amino-acid chain; its full sequence is Large ribosomal subunit protein uL4 (427 aa).

The residue at position 2 (Ala2) is an N-acetylalanine. Position 14 is an N6-acetyllysine (Lys14). Arg97 carries the omega-N-methylarginine modification. Lys106 carries the N6-acetyllysine modification. A Glycyl lysine isopeptide (Lys-Gly) (interchain with G-Cter in SUMO2) cross-link involves residue Lys239. Lys259 is modified (N6-acetyllysine). Thr266 is subject to Phosphothreonine. Phosphoserine is present on residues Ser290 and Ser295. The residue at position 300 (Arg300) is a Citrulline. Lys327 participates in a covalent cross-link: Glycyl lysine isopeptide (Lys-Gly) (interchain with G-Cter in SUMO2). N6-acetyllysine is present on residues Lys333 and Lys353. Lys364 carries the N6-acetyllysine; alternate modification. Lys364 is covalently cross-linked (Glycyl lysine isopeptide (Lys-Gly) (interchain with G-Cter in SUMO1); alternate). Ser365 is subject to Phosphoserine. A disordered region spans residues 369-427 (AAVAGKKPVVGKKGKKAAVGVKKQKKPLVGKKAAATKKPAPEKKPAEKKPTTEEKKPAA). The span at 377-397 (VVGKKGKKAAVGVKKQKKPLV) shows a compositional bias: basic residues. Residues 407-427 (PAPEKKPAEKKPTTEEKKPAA) show a composition bias toward basic and acidic residues.

Belongs to the universal ribosomal protein uL4 family. In terms of assembly, component of the large ribosomal subunit. May bind IPO9 with low affinity. Interacts with RBM3. In terms of processing, citrullinated by PADI4.

Its subcellular location is the cytoplasm. In terms of biological role, component of the large ribosomal subunit. The ribosome is a large ribonucleoprotein complex responsible for the synthesis of proteins in the cell. This is Large ribosomal subunit protein uL4 (RPL4) from Homo sapiens (Human).